We begin with the raw amino-acid sequence, 295 residues long: Secreted frizzled-related protein 2 (295 aa).

The first 24 residues, Met-1–Gly-24, serve as a signal peptide directing secretion. Residues Tyr-35–Leu-155 form the FZ domain. 8 disulfide bridges follow: Cys-40/Cys-103, Cys-50/Cys-96, Cys-87/Cys-125, Cys-114/Cys-152, Cys-118/Cys-142, Cys-172/Cys-245, Cys-175/Cys-247, and Cys-190/Cys-295. Residues Cys-172 to Cys-295 form the NTR domain.

Belongs to the secreted frizzled-related protein (sFRP) family. Expressed in adipose tissue, heart, brain, skeletal muscle, pancreas, thymus, prostate, testis, ovary, small intestine and colon. Highest levels in adipose tissue, small intestine and colon.

It localises to the secreted. In terms of biological role, soluble frizzled-related proteins (sFRPS) function as modulators of Wnt signaling through direct interaction with Wnts. They have a role in regulating cell growth and differentiation in specific cell types. SFRP2 may be important for eye retinal development and for myogenesis. In Homo sapiens (Human), this protein is Secreted frizzled-related protein 2 (SFRP2).